Consider the following 251-residue polypeptide: MDNETKATTFSKSTGLPRKRFYRARAHSNPLSDSHFPIPISPAHVDYSLHFPKFVEADNKFIKKVEFADIGCGFGGLLISLATLFPDTLMIGMELRDKVTEYVKERILALRRTSSEGQYENISVVRTNSMKYIPNYFEKGQLSKMFFLFPDPHFKEKNHRRRVISTHLLDEYAYVLRAGGIIYTITDVEELGEWMKSCLEKHPMFESLTQEELVSDPVVELLCSATEEGQKVARNGGQTFRAVFRRIAYVS.

Residues G71, 94–95 (EL), 128–129 (NS), and L148 each bind S-adenosyl-L-methionine. The active site involves D151. 226–228 (TEE) contacts S-adenosyl-L-methionine.

This sequence belongs to the class I-like SAM-binding methyltransferase superfamily. TrmB family.

It localises to the nucleus. It carries out the reaction guanosine(46) in tRNA + S-adenosyl-L-methionine = N(7)-methylguanosine(46) in tRNA + S-adenosyl-L-homocysteine. It participates in tRNA modification; N(7)-methylguanine-tRNA biosynthesis. In terms of biological role, catalyzes the formation of N(7)-methylguanine at position 46 (m7G46) in tRNA. The chain is tRNA (guanine-N(7)-)-methyltransferase from Arabidopsis thaliana (Mouse-ear cress).